The chain runs to 313 residues: Secreted mono- and diacylglycerol lipase MDL5 (313 aa).

Residues 1–20 (MQLQYVLTLLWIIFAQNVFS) form the signal peptide. Residues Cys66 and Cys306 are joined by a disulfide bond. Asn72 and Asn111 each carry an N-linked (GlcNAc...) asparagine glycan. Catalysis depends on Ser180, which acts as the Nucleophile. The active site involves Asp238. The N-linked (GlcNAc...) asparagine glycan is linked to Asn263. Residue His290 is part of the active site.

It belongs to the AB hydrolase superfamily. Lipase family. Class 3 subfamily.

It is found in the secreted. Its subcellular location is the cell wall. The catalysed reaction is a monoacylglycerol + H2O = glycerol + a fatty acid + H(+). It catalyses the reaction a diacylglycerol + H2O = a monoacylglycerol + a fatty acid + H(+). Functionally, secreted lipase involved in Dandruff and seborrheic dermatitis (D/SD) probably via lipase-mediated breakdown of sebaceous lipids and release of irritating free fatty acids. Shows activity against monoglyceride and diglyceride substrates, but not triglyceride substrates and does not exhibit regio-selective production of diacylglycerols. Cleaves oleic acid from 1,2 isomers of diolein on both the 1 and the 2 position of the glycerol backbone, resulting mainly in free fatty acids but no monoolein is detected. Shows activity on monoolein and liberates mostly free fatty acids, but can also perform the reverse reaction and produce diolein. The protein is Secreted mono- and diacylglycerol lipase MDL5 of Malassezia globosa (strain ATCC MYA-4612 / CBS 7966) (Dandruff-associated fungus).